A 550-amino-acid chain; its full sequence is Hydroxylamine reductase (550 aa).

C3, C6, C18, and C25 together coordinate [2Fe-2S] cluster. The hybrid [4Fe-2O-2S] cluster site is built by H249, E273, C317, C405, C433, C458, E492, and K494. The residue at position 405 (C405) is a Cysteine persulfide.

Belongs to the HCP family. [2Fe-2S] cluster is required as a cofactor. Requires hybrid [4Fe-2O-2S] cluster as cofactor.

It localises to the cytoplasm. The enzyme catalyses A + NH4(+) + H2O = hydroxylamine + AH2 + H(+). Inhibited by oxygen. Activated by cyanide except in the prolonged presence of excess cyanide, where the enzyme is inactivated. Functionally, catalyzes the reduction of hydroxylamine to form NH(3) and H(2)O. Is also able to reduce hydroxylamine analogs such as methylhydroxylamine and hydroxyquinone. Might have a role as a scavenger of potentially toxic by-products of nitrate metabolism. The chain is Hydroxylamine reductase from Escherichia coli (strain K12).